The sequence spans 152 residues: Transcriptional regulator MraZ (152 aa).

SpoVT-AbrB domains follow at residues 5 to 52 and 81 to 124; these read VNQL…PLPE and AQEL…DESL.

This sequence belongs to the MraZ family. Forms oligomers.

It localises to the cytoplasm. The protein localises to the nucleoid. This is Transcriptional regulator MraZ from Halorhodospira halophila (strain DSM 244 / SL1) (Ectothiorhodospira halophila (strain DSM 244 / SL1)).